The sequence spans 84 residues: Large ribosomal subunit protein bL31B-2 (84 aa).

The protein belongs to the bacterial ribosomal protein bL31 family. Type B subfamily. Part of the 50S ribosomal subunit.

The polypeptide is Large ribosomal subunit protein bL31B-2 (Streptomyces coelicolor (strain ATCC BAA-471 / A3(2) / M145)).